Consider the following 96-residue polypeptide: Molybdopterin synthase sulfur carrier subunit (96 aa).

At Gly-96 the chain carries 1-thioglycine; alternate. Gly-96 is modified (glycyl adenylate; alternate).

It belongs to the MoaD family. MOCS2A subfamily. As to quaternary structure, heterotetramer; composed of 2 small (MOCS2A) and 2 large (MOCS2B) subunits. In terms of processing, C-terminal thiocarboxylation occurs in 2 steps, it is first acyl-adenylated (-COAMP) via the hesA/moeB/thiF part of UBA4, then thiocarboxylated (-COSH) via the rhodanese domain of UBA4.

Its subcellular location is the cytoplasm. The protein operates within cofactor biosynthesis; molybdopterin biosynthesis. Acts as a sulfur carrier required for molybdopterin biosynthesis. Component of the molybdopterin synthase complex that catalyzes the conversion of precursor Z into molybdopterin by mediating the incorporation of 2 sulfur atoms into precursor Z to generate a dithiolene group. In the complex, serves as sulfur donor by being thiocarboxylated (-COSH) at its C-terminus by UBA4. After interaction with MOCS2B, the sulfur is then transferred to precursor Z to form molybdopterin. The polypeptide is Molybdopterin synthase sulfur carrier subunit (Phaeosphaeria nodorum (strain SN15 / ATCC MYA-4574 / FGSC 10173) (Glume blotch fungus)).